Consider the following 318-residue polypeptide: MTETTERIVLLVPHTGRSSNIESAVLAAEHLDRAGITVRVLVNEEDDPIKTHPVLGRFEHVIHSRTAAEGAELVLVLGGDGTFLRAADLAHAVDLPVLGINLGHVGFLAEWESDSLEDAVKRVIDCDYRVEDRMTLDVIVRDSDLEVIGRGWALNEVSVENLNRRGVLDATLEVDFRPVASFGCDGVLISTPTGSTAYAFSAGGPVLWPELDAILVVPNNAHALFTKPLVVSPRSTVAVESMSGTSPAMAVMDGFRPIPMPPGSRVEIVRGKRPVRWVRLDSLPFTDRLVHKLRLPVVGWRGPDKQKELLDAETPDQP.

The active-site Proton acceptor is aspartate 80. NAD(+)-binding positions include 80 to 81, arginine 85, 155 to 156, aspartate 185, and 196 to 201; these read DG, NE, and TAYAFS.

The protein belongs to the NAD kinase family. A divalent metal cation serves as cofactor.

It is found in the cytoplasm. The enzyme catalyses NAD(+) + ATP = ADP + NADP(+) + H(+). Functionally, involved in the regulation of the intracellular balance of NAD and NADP, and is a key enzyme in the biosynthesis of NADP. Catalyzes specifically the phosphorylation on 2'-hydroxyl of the adenosine moiety of NAD to yield NADP. The chain is NAD kinase from Corynebacterium efficiens (strain DSM 44549 / YS-314 / AJ 12310 / JCM 11189 / NBRC 100395).